The sequence spans 246 residues: Large ribosomal subunit protein uL2 (246 aa).

Residues 197 to 226 (SPYAHPHGGGSHPKGGTPVPKTAPPGQKVG) form a disordered region.

It belongs to the universal ribosomal protein uL2 family. In terms of assembly, part of the 50S ribosomal subunit. Forms a bridge to the 30S subunit in the 70S ribosome.

Its function is as follows. One of the primary rRNA binding proteins. Required for association of the 30S and 50S subunits to form the 70S ribosome, for tRNA binding and peptide bond formation. It has been suggested to have peptidyltransferase activity; this is somewhat controversial. Makes several contacts with the 16S rRNA in the 70S ribosome. This is Large ribosomal subunit protein uL2 from Pyrobaculum islandicum (strain DSM 4184 / JCM 9189 / GEO3).